The primary structure comprises 336 residues: Ketoreductase adrE (336 aa).

Position 171 (tyrosine 171) interacts with NADP(+).

The protein belongs to the NAD(P)-dependent epimerase/dehydratase family. Dihydroflavonol-4-reductase subfamily.

It functions in the pathway secondary metabolite biosynthesis; terpenoid biosynthesis. Ketoreductase; part of the gene cluster that mediates the biosynthesis of andrastins, meroterpenoid compounds that exhibit inhibitory activity against ras farnesyltransferase, suggesting that they could be promising leads for antitumor agents. The first step of the pathway is the synthesis of 3,5-dimethylorsellinic acid (DMOA) by the polyketide synthase adrD via condensation of one acetyl-CoA starter unit with 3 malonyl-CoA units and 2 methylations. DMAO is then converted to farnesyl-DMAO by the prenyltransferase adrG. The methyltransferase adrK catalyzes the methylation of the carboxyl group of farnesyl-DMAO to farnesyl-DMAO methyl ester which is further converted to epoxyfarnesyl-DMAO methyl ester by the FAD-dependent monooxygenase adrH. The terpene cyclase adrI then catalyzes the carbon skeletal rearrangement to generate the andrastin E, the first compound in the pathway having the andrastin scaffold, with the tetracyclic ring system. The post-cyclization tailoring enzymes adrF, adrE, adrJ, and adrA, are involved in the conversion of andrastin E into andrastin A. The short chain dehydrogenase adrF is responsible for the oxidation of the C-3 a hydroxyl group of andrastin E to yield the corresponding ketone, andrastin D. The ketoreductase adrE stereoselectively reduces the carbonyl moiety to reverse the stereochemistry of the C-3 position to yield andrastin F. The acetyltransferase adrJ is the acetyltransferase that attaches the acetyl group to the C-3 hydroxyl group of andrastin F to yield andrastin C. Finally, the cytochrome P450 monooxygenase adrA catalyzes two sequential oxidation reactions of the C-23 methyl group, to generate the corresponding alcohol andrastin B, and aldehyde andrastin A. The chain is Ketoreductase adrE from Penicillium roqueforti.